A 433-amino-acid polypeptide reads, in one-letter code: Serine--tRNA ligase (433 aa).

235 to 237 (TSE) contacts L-serine. 266–268 (RSE) lines the ATP pocket. Glu-289 is an L-serine binding site. Residue 353–356 (EISS) coordinates ATP. Residue Ser-388 participates in L-serine binding.

The protein belongs to the class-II aminoacyl-tRNA synthetase family. Type-1 seryl-tRNA synthetase subfamily. As to quaternary structure, homodimer. The tRNA molecule binds across the dimer.

It is found in the cytoplasm. The catalysed reaction is tRNA(Ser) + L-serine + ATP = L-seryl-tRNA(Ser) + AMP + diphosphate + H(+). It carries out the reaction tRNA(Sec) + L-serine + ATP = L-seryl-tRNA(Sec) + AMP + diphosphate + H(+). It participates in aminoacyl-tRNA biosynthesis; selenocysteinyl-tRNA(Sec) biosynthesis; L-seryl-tRNA(Sec) from L-serine and tRNA(Sec): step 1/1. In terms of biological role, catalyzes the attachment of serine to tRNA(Ser). Is also able to aminoacylate tRNA(Sec) with serine, to form the misacylated tRNA L-seryl-tRNA(Sec), which will be further converted into selenocysteinyl-tRNA(Sec). This is Serine--tRNA ligase from Burkholderia pseudomallei (strain 1106a).